The chain runs to 592 residues: MASSQLALFSVSDKTGLVEFARNLASLGLSLVASGGTAKAIRDAGLAVRDVSELTGFPEMLGGRVKTLHPAVHAGILARNIPEDAADMARLDFNLIRVVVCNLYPFVKTVASPDVTVEAAVEQIDIGGVTLLRAAAKNHARVTVVCEPEDYGAVAAEMQGSGNKDTSLETRRHLALKAFTHTAQYDEAISDYFRRQYSKGISQMPLRYGMNPHQTPAQLYTLKPKLPITVLNGAPGFINLCDALNAWQLVTELRGAVDIPAAASFKHVSPAGAAVGVPLSEDEARVCMVYDLYPTLTPLAIAYARARGADRMSSFGDFVALSDVCDVPTAKIISREVSDGIVAPGYEEEALKILSKKKNGSYCVLQMDQSYKPDENEVRTLFGLRLSQKRNNGVVDKSLFSNIVTKNKDLPESALRDLIVATIAVKYTQSNSVCYAKDGQVIGIGAGQQSRIHCTRLAGDKANSWWLRHHPRVLSMKFKAGVKRAEVSNAIDQYVTGTIGEGEDLVKWKALFEEVPELLTEAEKKEWVDKLSGVSVSSDAFFPFRDNVDRAKRSGVAYIVAPSGSTADKVVIEACDELGIVLAHTDLRLFHH.

The residue at position 1 (M1) is an N-acetylmethionine. Residues 1–146 (MASSQLALFS…KNHARVTVVC (146 aa)) enclose the MGS-like domain. Residues 1–198 (MASSQLALFS…ISDYFRRQYS (198 aa)) are IMP cyclohydrolase. IMP is bound by residues 12 to 14 (SDK), 34 to 37 (SGGT), 64 to 67 (RVKT), 101 to 102 (CN), and 125 to 126 (DI). K137 (proton donor/acceptor; for FAICAR cyclization activity) is an active-site residue. K199 carries the N6-acetyllysine modification. Positions 199-592 (KGISQMPLRY…AHTDLRLFHH (394 aa)) are AICAR formyltransferase. Residues 207 to 208 (RY), H267, G316, D339, N431, and R451 contribute to the 5-amino-1-(5-phospho-beta-D-ribosyl)imidazole-4-carboxamide site. Residue H267 is the Proton acceptor; for AICAR formyltransferase activity of the active site. Residue I452 coordinates (6R)-10-formyltetrahydrofolate. F541 is a binding site for 5-amino-1-(5-phospho-beta-D-ribosyl)imidazole-4-carboxamide. (6R)-10-formyltetrahydrofolate-binding positions include D546 and 565–566 (ST). R588 is a binding site for 5-amino-1-(5-phospho-beta-D-ribosyl)imidazole-4-carboxamide.

The protein belongs to the PurH family. Homodimer. Associates with internalized INSR complexes on Golgi/endosomal membranes. Interacts with INSR; ATIC together with PRKAA2/AMPK2 and HACD3/PTPLAD1 is proposed to be part of a signaling network regulating INSR autophosphorylation and endocytosis. Expressed in liver.

The protein localises to the cytoplasm. The protein resides in the cytosol. The catalysed reaction is (6R)-10-formyltetrahydrofolate + 5-amino-1-(5-phospho-beta-D-ribosyl)imidazole-4-carboxamide = 5-formamido-1-(5-phospho-D-ribosyl)imidazole-4-carboxamide + (6S)-5,6,7,8-tetrahydrofolate. It catalyses the reaction 10-formyldihydrofolate + 5-amino-1-(5-phospho-beta-D-ribosyl)imidazole-4-carboxamide = 5-formamido-1-(5-phospho-D-ribosyl)imidazole-4-carboxamide + 7,8-dihydrofolate. It carries out the reaction IMP + H2O = 5-formamido-1-(5-phospho-D-ribosyl)imidazole-4-carboxamide. Its pathway is purine metabolism; IMP biosynthesis via de novo pathway; 5-formamido-1-(5-phospho-D-ribosyl)imidazole-4-carboxamide from 5-amino-1-(5-phospho-D-ribosyl)imidazole-4-carboxamide (10-formyl THF route): step 1/1. The protein operates within purine metabolism; IMP biosynthesis via de novo pathway; IMP from 5-formamido-1-(5-phospho-D-ribosyl)imidazole-4-carboxamide: step 1/1. Its activity is regulated as follows. AMP and XMP inhibit AICAR formyltransferase activity. Functionally, bifunctional enzyme that catalyzes the last two steps of purine biosynthesis. Acts as a transformylase that incorporates a formyl group to the AMP analog AICAR (5-amino-1-(5-phospho-beta-D-ribosyl)imidazole-4-carboxamide) to produce the intermediate formyl-AICAR (FAICAR). Can use both 10-formyldihydrofolate and 10-formyltetrahydrofolate as the formyl donor in this reaction. Also catalyzes the cyclization of FAICAR to inosine monophosphate (IMP). Promotes insulin receptor/INSR autophosphorylation and is involved in INSR internalization. In Rattus norvegicus (Rat), this protein is Bifunctional purine biosynthesis protein ATIC (Atic).